The chain runs to 597 residues: MFS-type transporter FPY5 (597 aa).

The tract at residues 1-55 is disordered; sequence MSETTGLPLKHLQGSPPGTPVNTNNESNEASPDDGCRLPDTVTEAEASSDNHGSV. 2 stretches are compositionally biased toward polar residues: residues 20-30 and 46-55; these read PVNTNNESNEA and EASSDNHGSV. N-linked (GlcNAc...) asparagine glycosylation occurs at N25. A glycan (N-linked (GlcNAc...) asparagine) is linked at N72. Transmembrane regions (helical) follow at residues 94 to 114, 120 to 140, 147 to 167, 183 to 203, 214 to 234, 241 to 261, 286 to 306, 316 to 336, and 360 to 380; these read LSLL…VSIV, FNMA…FLII, IFGC…FSMA, FQGM…PLMV, IMSS…GAIT, WVFY…AFSV, VDFV…FALE, SGAI…FIAW, and FVMG…AALI. N390 carries an N-linked (GlcNAc...) asparagine glycan. 5 helical membrane passes run 402-422, 424-444, 463-483, 498-518, and 562-582; these read LPLL…VSKL, VPPL…VGLY, IMGL…PLVV, IRVL…INHI, and EQMR…VLLV.

It belongs to the major facilitator superfamily. TCR/Tet family.

The protein resides in the membrane. Its pathway is secondary metabolite biosynthesis. In terms of biological role, MFS-type transporter; part of the gene cluster that mediates the biosynthesis of the gamma-pyrones fusapyrone (FPY) and deoxyfusapyrone (dFPY). This Fusarium mangiferae (Mango malformation disease fungus) protein is MFS-type transporter FPY5.